Consider the following 1088-residue polypeptide: MGKYNLVLSEYLSFVYNSQSAVQIPIYYSSNSELEKRCIEFHAKCVDSSKKGLSLKPLFEEYKDVIDNATLLSILSYSYDKYNAVERKLVNYAKGKPLEADLTANELDYENNKITSELFQSAEEYTDSLMDPAILTSLSSNLNAVMFWLERHSNDVADANKIYKRRLDLFTIVASTVNKYGVPRHNEKYRYEYEVMKDKPYYLVTWANSSIEMLMSVFSHEDYLIAKELIILSYSNRSTLAKLVSSPMSILVALIDINGTFITNEELELEFSDKYVKAIVPDQIFDELQEMIDNMRKVGLVDIPKMIQEWLVDCSLEKFTLMSKIYSWSFHVGFRKQKMIDAALDQLKTEYTEDVDGEMYNEYTMLIRDEIVKMLEVPVKHDDHLLRDSELAGLLSMSSASNGESRQLKFGRKTIFSTKKNMHVMDDIAHGRYTPGVIPPVNVDRPIPLGRRDVPGRRTRIIFILPYEYFIAQHAVVEKMLLYAKHTREYAEFYSQSNQLLSYGDVTRFLSSNSMVLYTDVSQWDSSQHNTQPFRKGIIMGLDMLSNMTNDPKVAQTLNLYKQTQINLMDSYVQIPDGNVIKKIQYGAVASGEKQTKAANSIANLALIKMVLSRIANKYSFITKIIRVDGDDNYAVLQFNTDVTKQMVQDVSNDVRYIYSRMNAKVKALVSTVGIEIAKRYIAGGKIFFRAGINLLNNEKRGQSTQWDQAAILYSNYIVNKLRGFETDREFILTKIIQMTSVAITGSLRLFPSERVLTTNSTFKVFDSEDFIIEYGTTDDEVYIQRAFMSLSSQKSGIADEIASSQTFKNYVNKLSDQLLVSKNVIVSKGIAVTEKAKLNSYAPVYLEKRRAQISALLTMLQKPVSFKSNKITINDILRDIKPFFVTSEANLSIQYRKFMPTLPDNVQYVIQCIGSRTYQIEDSGSKSSISKLISKYSVYKPSIEELYKVISLREQEIQLYLVSLGVPPVDAGTYVGSRIYSQDKYKILESYVYNLLSINYGCYQLFDFNSPDLEKLIRIPFKGKIPAVTFILHLYAKLEIINYAIKNGAWISLFCNYPKSEMIKLWKKMWNITALRSPYTSANFFQD.

The 187-residue stretch at 501-687 (LSYGDVTRFL…AKRYIAGGKI (187 aa)) folds into the RdRp catalytic domain.

It belongs to the reoviridae RNA-directed RNA polymerase family. In terms of assembly, interacts with VP3 (Potential). Interacts with VP2; this interaction activates VP1. Interacts with NSP5; this interaction is probably necessary for the formation of functional virus factories. Interacts with NSP2; this interaction is weak. Requires Mg(2+) as cofactor.

The protein resides in the virion. It catalyses the reaction RNA(n) + a ribonucleoside 5'-triphosphate = RNA(n+1) + diphosphate. RNA-directed RNA polymerase that is involved in both transcription and genome replication. Together with VP3 capping enzyme, forms an enzyme complex positioned near the channels situated at each of the five-fold vertices of the core. Following infection, the outermost layer of the virus is lost, leaving a double-layered particle (DLP) made up of the core and VP6 shell. VP1 then catalyzes the transcription of fully conservative plus-strand genomic RNAs that are extruded through the DLP's channels into the cytoplasm where they function as mRNAs for translation of viral proteins. One copy of each of the viral (+)RNAs is also recruited during core assembly, together with newly synthesized polymerase complexes and VP2. The polymerase of these novo-formed particles catalyzes the synthesis of complementary minus-strands leading to dsRNA formation. To do so, the polymerase specifically recognizes and binds 4 bases 5'-UGUG-3' in the conserved 3'-sequence of plus-strand RNA templates. VP2 presumably activates the autoinhibited VP1-RNA complex to coordinate packaging and genome replication. Once dsRNA synthesis is complete, the polymerase switches to the transcriptional mode, thus providing secondary transcription. This is RNA-directed RNA polymerase from Homo sapiens (Human).